A 374-amino-acid chain; its full sequence is Glutamine synthetase (374 aa).

Residues 2–25 (TTSASSHLNKGIKQVYMSLPQGEK) are required for glutamine-induced ubiquitination by CRL4(CRBN) and proteasomal degradation. An N6-acetyllysine mark is found at Lys11 and Lys14. In terms of domain architecture, GS beta-grasp spans 24–106 (EKVQAMYIWI…VLCESFQVQF (83 aa)). Residues 114–374 (LRHTCKRIMD…TGDEPFQYKN (261 aa)) form the GS catalytic domain. Glu135 contributes to the ATP binding site. Positions 135, 137, 197, and 204 each coordinate Mn(2+). An ATP-binding site is contributed by 204-209 (EFQIGP). An L-glutamate-binding site is contributed by 247-248 (NW). Residue His254 coordinates Mn(2+). Residues 256–258 (NFS), Arg320, and Arg325 each bind ATP. Residue Arg320 coordinates L-glutamate. 337 to 339 (YFE) provides a ligand contact to ADP. Mn(2+) is bound at residue Glu339. An L-glutamate-binding site is contributed by Arg341. Ser344 carries the post-translational modification Phosphoserine.

This sequence belongs to the glutamine synthetase family. Decamer; composed of two pentamers. Interacts with PALMD. Interacts with RHOJ. Interacts with BEST2; this interaction tethers a fraction of GLUL to the membrane, causing a decrease of cytosolic glutamine synthase (GS) activity and inhibits the chloride channel activity of BEST2 by affecting the gating at the aperture in the absence of intracellular glutamate. The cofactor is Mg(2+). Mn(2+) serves as cofactor. Palmitoylated; undergoes autopalmitoylation. In terms of processing, acetylated by EP300/p300; acetylation is stimulated by increased glutamine levels and promotes ubiquitin-mediated proteasomal degradation. Post-translationally, ubiquitinated by ZNRF1. Ubiquitinated by the DCX (DDB1-CUL4-X-box) E3 ubiquitin-protein ligase complex called CRL4(CRBN), leading to proteasomal degradation.

Its subcellular location is the cytoplasm. The protein resides in the cytosol. The protein localises to the microsome. It is found in the mitochondrion. It localises to the cell membrane. The enzyme catalyses L-glutamate + NH4(+) + ATP = L-glutamine + ADP + phosphate + H(+). It catalyses the reaction L-cysteinyl-[protein] + hexadecanoyl-CoA = S-hexadecanoyl-L-cysteinyl-[protein] + CoA. Its activity is regulated as follows. Glutamine synthetase activity is inhibited by methionine sulfoximine (MSO). Functionally, glutamine synthetase that catalyzes the ATP-dependent conversion of glutamate and ammonia to glutamine. Its role depends on tissue localization: in the brain, it regulates the levels of toxic ammonia and converts neurotoxic glutamate to harmless glutamine, whereas in the liver, it is one of the enzymes responsible for the removal of ammonia. Plays a key role in ammonium detoxification during erythropoiesis: the glutamine synthetase activity is required to remove ammonium generated by porphobilinogen deaminase (HMBS) during heme biosynthesis to prevent ammonium accumulation and oxidative stress. Essential for proliferation of fetal skin fibroblasts. Independently of its glutamine synthetase activity, required for endothelial cell migration during vascular development. Involved in angiogenesis by regulating membrane localization and activation of the GTPase RHOJ, possibly by promoting RHOJ palmitoylation. May act as a palmitoyltransferase for RHOJ: able to autopalmitoylate and then transfer the palmitoyl group to RHOJ. Plays a role in ribosomal 40S subunit biogenesis. Through the interaction with BEST2, inhibits BEST2 channel activity by affecting the gating at the aperture in the absence of intracellular L-glutamate, but sensitizes BEST2 to intracellular L-glutamate, which promotes the opening of BEST2 and thus relieves its inhibitory effect on BEST2. The protein is Glutamine synthetase of Macaca fascicularis (Crab-eating macaque).